Reading from the N-terminus, the 60-residue chain is Metallothionein A (60 aa).

A beta region spans residues 1-28 (MDPCECSKSGNCNCGGSCTCTNCSCKSC). 20 residues coordinate a divalent metal cation: cysteine 4, cysteine 6, cysteine 12, cysteine 14, cysteine 18, cysteine 20, cysteine 23, cysteine 25, cysteine 28, cysteine 32, cysteine 33, cysteine 35, cysteine 36, cysteine 40, cysteine 43, cysteine 47, cysteine 49, cysteine 54, cysteine 58, and cysteine 59. An alpha region spans residues 29 to 60 (KKSCCPCCPSGCTKCASGCVCIGKTCDTSCCQ).

The protein belongs to the metallothionein superfamily. Type 1 family.

In terms of biological role, metallothioneins have a high content of cysteine residues that bind various heavy metals. The protein is Metallothionein A (mta) of Chaenocephalus aceratus (Blackfin icefish).